We begin with the raw amino-acid sequence, 91 residues long: DNA-directed RNA polymerase subunit omega (91 aa).

It belongs to the RNA polymerase subunit omega family. As to quaternary structure, the RNAP catalytic core consists of 2 alpha, 1 beta, 1 beta' and 1 omega subunit. When a sigma factor is associated with the core the holoenzyme is formed, which can initiate transcription. The rRNA transcription and antitermination complex (rrnTAC) consists of RNAP, NusA, NusB, NusE (rpsJ), NusG, SubB, ribosomal protein S4, DNA and precursor rRNA; S4 is more flexible than other subunits.

It carries out the reaction RNA(n) + a ribonucleoside 5'-triphosphate = RNA(n+1) + diphosphate. Functionally, promotes RNA polymerase (RNAP) assembly. Latches the N- and C-terminal regions of the beta' subunit thereby facilitating its interaction with the beta and alpha subunits. Its function is as follows. Part of the processive rRNA transcription and antitermination complex (rrnTAC). The complex forms an RNA-chaperone ring around the RNA exit tunnel of RNAP. It supports rapid transcription and antitermination of rRNA operons, cotranscriptional rRNA folding, and annealing of distal rRNA regions to allow correct ribosome biogenesis. This chain is DNA-directed RNA polymerase subunit omega (rpoZ), found in Escherichia coli (strain K12).